The sequence spans 67 residues: Small ribosomal subunit protein eS17 (67 aa).

It belongs to the eukaryotic ribosomal protein eS17 family.

The sequence is that of Small ribosomal subunit protein eS17 from Thermococcus gammatolerans (strain DSM 15229 / JCM 11827 / EJ3).